A 119-amino-acid chain; its full sequence is U-scoloptoxin(01)-Cw1a (119 aa).

The signal sequence occupies residues 1–22 (MSKATNFYLFVLLGVFVALVRT). The region spanning 38-96 (SFSCDGKKPGYYADQQMECQVYHVCTPDNEHAVLLCGPGTIFNQKHLVCDFPSNYACAD) is the Chitin-binding type-2 domain. A disulfide bond links Cys73 and Cys86.

It belongs to the scoloptoxin-01 family. Contains 3 disulfide bonds. Expressed by the venom gland.

Its subcellular location is the secreted. This is U-scoloptoxin(01)-Cw1a from Cormocephalus westwoodi (Westwood's green centipede).